We begin with the raw amino-acid sequence, 573 residues long: WRKY transcription factor SUSIBA2 (573 aa).

Disordered regions lie at residues 56-133 and 157-192; these read AHPD…CSRE and PAEVGTSEPQQMNSSDNAMQEPQSENVADKSADDGY. Positions 64–85 are enriched in basic and acidic residues; it reads PRDKSVRNAHEDRGSRDFEFKP. Low complexity predominate over residues 108–122; sequence MQNQSMNPSSSSSNM. Residues 163–182 show a composition bias toward polar residues; it reads SEPQQMNSSDNAMQEPQSEN. Positions 183–192 are enriched in basic and acidic residues; sequence VADKSADDGY. The WRKY 1 DNA-binding region spans 183–247; sequence VADKSADDGY…YKGRHNHPKP (65 aa). Cys214, Cys219, His242, and His244 together coordinate Zn(2+). The segment at 240 to 332 is disordered; sequence GRHNHPKPQP…EDLESKRRKM (93 aa). Over residues 263 to 277 the composition is skewed to basic and acidic residues; the sequence is GEERYDGASAADDKS. The WRKY 2 DNA-binding region spans 357-422; the sequence is SEVDILDDGY…YEGKHNHEVP (66 aa). Zn(2+) is bound by residues Cys388, Cys393, His417, and His419.

The protein belongs to the WRKY group I family. In terms of tissue distribution, expressed in endosperm, but not in leaves.

The protein resides in the nucleus. Functionally, transcription factor involved in starch synthesis. Acts as a transcriptional activator in sugar signaling. Interacts specifically with the SURE and W-box elements, but not with the SP8a element. The chain is WRKY transcription factor SUSIBA2 from Hordeum vulgare (Barley).